Here is a 244-residue protein sequence, read N- to C-terminus: MPKNTLHIKNIDIQTTHIMLKTDINCDIKPFIQNQREIILNEIKENPNFLKSYTPIPLIDKKPILKLMTKAGEIANTGPMAAVAGSISEMCLDYLESFKSKFSIVENGGDIALKTNKKINMGIYAGKTSFSYNYGFKIKPKPYKYGICTSSYDGPSKSFGSTDATIVFSKQSSIADSLATSIGNYGNGNTENEVVHNALSYAEKYSDYYEGVLVIKGETLGKTGHIPQLISINNTHVKEAFEIE.

This sequence belongs to the UPF0280 family.

This Methanosphaera stadtmanae (strain ATCC 43021 / DSM 3091 / JCM 11832 / MCB-3) protein is UPF0280 protein Msp_1322.